Reading from the N-terminus, the 628-residue chain is Isoleucine--tRNA ligase (628 aa).

The 'KMSKS' region signature appears at 505 to 509; the sequence is KMSKR. Lysine 508 is a binding site for ATP.

It belongs to the class-I aminoacyl-tRNA synthetase family.

It catalyses the reaction tRNA(Ile) + L-isoleucine + ATP = L-isoleucyl-tRNA(Ile) + AMP + diphosphate. This chain is Isoleucine--tRNA ligase, found in Antonospora locustae (Microsporidian parasite).